Reading from the N-terminus, the 504-residue chain is Tegument protein VP16 homolog (504 aa).

Disordered stretches follow at residues 354 to 381 (EAGGGWRRSGSTRTRGRAARSTTGRLQR), 395 to 421 (ATPRQRLRARGEPRHTSGSGAFSQGRR), and 435 to 486 (RSGP…ANPF). The segment covering 361-378 (RSGSTRTRGRAARSTTGR) has biased composition (low complexity). Residues 447 to 460 (PVRSGLGLSRARGS) show a composition bias toward low complexity.

Belongs to the herpesviridae tegument protein VP16 protein family. In terms of assembly, associates with the VP16-induced complex; binding to host HCFC1 activates VP16 for association with the octamer motif-binding host protein POU2F1, to form a multiprotein-DNA complex responsible for activating transcription of the viral immediate early genes.

Its subcellular location is the virion tegument. The protein resides in the host nucleus. Its function is as follows. Transcriptional activator of immediate-early (IE) gene products (alpha genes). Acts as a key activator of lytic infection by initiating the lytic program through the assembly of the transcriptional regulatory VP16-induced complex composed of VP16 and two cellular factors, HCFC1 and POU2F1. VP16-induced complex represents a regulatory switch: when it is on, it promotes IE-gene expression and thus lytic infection, and when it is off, it limits IE-gene transcription favoring latent infection. In terms of biological role, may play a role in the aggregation of tegument proteins around nucleocapsids during virus morphogenesis. The polypeptide is Tegument protein VP16 homolog (Bos taurus (Bovine)).